The following is a 642-amino-acid chain: MTVRRLESKSEHISDDEERKEQLDYKKQMDVDTDRNIVLNGRLESQIAKLSVPPHEMRVVDDYSNSKNAERHSGEIQAYAKFAGSTWTYYVKKIRIILGREPANPSPKGKNEDLEVIDMNFGPSKVVSRKHAVVEYDLDDQTWNCSVYGRNGIKVDGKLFKNGETVKLTSGSILEVAGLQMMFVLPNAAEQKQTDESTIKEDAIKSEISAAVNDAAEYGDNKKPPYSYSVMIAQAILSSSECMMTLSNIYSWISTHYPYYRTTKSGWQNSIRHNLSLNKAFRKVPRKSGEQGKGMKWSIVPEFREEFIAKTRKTPRKRSPSSPVPLLAKKREGSPSLPIPILPKMKDTSIPAAEPASSTTSARDQTPSTPKDVGSPSTAETSAEEKQMETYKTPTHAALSDIISTHDYALDANSASQTKKAAFGSPIGSSTYPTSSPAPFWKYVAVPNPHDWPQVGSYDTISPYRNPVNSHLIYSQIQQSSPKKIDEQLHDLQGVDLVNGFEGISSWRESMVNKLRSSVSDSPTMNLANSNSKSSPVAVQRVSTLPQASANKQAKEMESKMSNSPTQKSKTEENNQAVRAILDASATMEKQYDLHRLPTPTSQTESASVPQIANPPNSQNLVKEKSPQQYIQVPQSNVKSSA.

Residues 1-23 form a disordered region; that stretch reads MTVRRLESKSEHISDDEERKEQL. An FHA domain is found at 96–160; sequence IILGREPANP…NGIKVDGKLF (65 aa). Residues 223 to 318 constitute a DNA-binding region (fork-head); sequence KPPYSYSVMI…AKTRKTPRKR (96 aa). Residues 310 to 319 show a composition bias toward basic residues; that stretch reads KTRKTPRKRS. 3 disordered regions span residues 310–392, 519–574, and 586–642; these read KTRK…ETYK, VSDS…TEEN, and ATME…KSSA. A phosphoserine mark is found at serine 319, serine 321, serine 322, serine 334, and serine 336. Low complexity predominate over residues 348–362; sequence TSIPAAEPASSTTSA. Composition is skewed to polar residues over residues 363 to 381, 519 to 552, and 599 to 642; these read RDQT…TAET, VSDS…SANK, and TPTS…KSSA. Serine 375, serine 535, and serine 626 each carry phosphoserine.

Phosphorylated. Occurs periodically during mitosis.

The protein resides in the nucleus. Its function is as follows. Required for promoter sequence element PCB-driven, M-phase-specific transcription. Acts as a transcriptional activator with a role in the regulation of mitosis. Binds, cooperatively with mcm1, the CLB cluster regulatory elements throughout the cell cycle. Regulates the periodic transcription of cdc15 and spo12. Required for the correct timing, positioning and contraction of the division septum. The protein is Fork head protein homolog 2 (fkh2) of Schizosaccharomyces pombe (strain 972 / ATCC 24843) (Fission yeast).